Reading from the N-terminus, the 1124-residue chain is Phytochrome A1 (1124 aa).

Positions 1-14 (MSSSRPSQSSTTSA) are enriched in low complexity. The segment at 1 to 20 (MSSSRPSQSSTTSARSKHSA) is disordered. In terms of domain architecture, GAF spans 218 to 401 (SMERLCDTMV…VFAIHVNKEL (184 aa)). Cys323 contacts phytochromobilin. The region spanning 617 to 687 (VTAEMVRLIE…KMLELALQGK (71 aa)) is the PAS 1 domain. In terms of domain architecture, PAC spans 690 to 746 (RNVEFEIKTHGPSGDSSPISLIVNACASRDVGDSVVGVCFIAQDITGQKNIMDKFTR). The 75-residue stretch at 747–821 (IEGDYRAIIQ…KNQEAFVNFG (75 aa)) folds into the PAS 2 domain. The 218-residue stretch at 901–1118 (YIRRQIRNPL…TFIISVELAV (218 aa)) folds into the Histidine kinase domain.

This sequence belongs to the phytochrome family. In terms of assembly, homodimer. Post-translationally, contains one covalently linked phytochromobilin chromophore.

In terms of biological role, regulatory photoreceptor which exists in two forms that are reversibly interconvertible by light: the Pr form that absorbs maximally in the red region of the spectrum and the Pfr form that absorbs maximally in the far-red region. Photoconversion of Pr to Pfr induces an array of morphogenic responses, whereas reconversion of Pfr to Pr cancels the induction of those responses. Pfr controls the expression of a number of nuclear genes including those encoding the small subunit of ribulose-bisphosphate carboxylase, chlorophyll A/B binding protein, protochlorophyllide reductase, rRNA, etc. It also controls the expression of its own gene(s) in a negative feedback fashion. The chain is Phytochrome A1 (PHYA1) from Nicotiana tabacum (Common tobacco).